Reading from the N-terminus, the 183-residue chain is Cell division protein ZapC (183 aa).

Belongs to the ZapC family. Interacts directly with FtsZ.

It localises to the cytoplasm. Its function is as follows. Contributes to the efficiency of the cell division process by stabilizing the polymeric form of the cell division protein FtsZ. Acts by promoting interactions between FtsZ protofilaments and suppressing the GTPase activity of FtsZ. The sequence is that of Cell division protein ZapC from Proteus mirabilis (strain HI4320).